A 277-amino-acid polypeptide reads, in one-letter code: MAPNSSVTVGNVVFDNNAALALIAGPCQFESRQHAFDMAGALKELTARLGIGLVYKTSYDKANRTSLSATRGAGMDAALPVFDELRKEFSLPVLTDVHTEEQCAIVAPHVDVLQIPAFLSRQTDMLVAAAKTGKVINVKKGQFLAPWDMKNVVAKITGSGNPNVLTTERGASFGYNTLVSDMRALPVMAEIGAPVIFDATHSVQQPGGQGGSSGGERRFVETLARAAVAVGVAGVFIETHQDPDNSTSSDGPNMLPLKDMPALLERLMAFDRIAKGR.

The protein belongs to the KdsA family.

It is found in the cytoplasm. The enzyme catalyses D-arabinose 5-phosphate + phosphoenolpyruvate + H2O = 3-deoxy-alpha-D-manno-2-octulosonate-8-phosphate + phosphate. Its pathway is carbohydrate biosynthesis; 3-deoxy-D-manno-octulosonate biosynthesis; 3-deoxy-D-manno-octulosonate from D-ribulose 5-phosphate: step 2/3. It functions in the pathway bacterial outer membrane biogenesis; lipopolysaccharide biosynthesis. This Mesorhizobium japonicum (strain LMG 29417 / CECT 9101 / MAFF 303099) (Mesorhizobium loti (strain MAFF 303099)) protein is 2-dehydro-3-deoxyphosphooctonate aldolase (kdsA).